Reading from the N-terminus, the 151-residue chain is C-C motif chemokine 25 (151 aa).

Positions 1–23 (MRPWLLACLVACFVGAWAPAIHA) are cleaved as a signal peptide. 2 disulfide bridges follow: Cys30–Cys58 and Cys31–Cys75. The disordered stretch occupies residues 93–151 (RNKKDSKPHHSGRRFFQGPQSGVRKLSSGTSRPLLLKFSGPTRSSKRKASLLTTAIPGP).

It belongs to the intercrine beta (chemokine CC) family.

Its subcellular location is the secreted. Potentially involved in T-cell development. Recombinant protein shows chemotactic activity on thymocytes, macrophages, THP-1 cells, and dendritics cells but is inactive on peripheral blood lymphocytes and neutrophils. Binds to CCR9. Binds to atypical chemokine receptor ACKR4 and mediates the recruitment of beta-arrestin (ARRB1/2) to ACKR4. The polypeptide is C-C motif chemokine 25 (CCL25) (Sus scrofa (Pig)).